The chain runs to 202 residues: Dephospho-CoA kinase (202 aa).

The DPCK domain maps to 5–202 (VIGLTGGIGS…KKYLTLTKMV (198 aa)). 13–18 (GSGKTT) lines the ATP pocket.

Belongs to the CoaE family.

Its subcellular location is the cytoplasm. The enzyme catalyses 3'-dephospho-CoA + ATP = ADP + CoA + H(+). Its pathway is cofactor biosynthesis; coenzyme A biosynthesis; CoA from (R)-pantothenate: step 5/5. Functionally, catalyzes the phosphorylation of the 3'-hydroxyl group of dephosphocoenzyme A to form coenzyme A. This chain is Dephospho-CoA kinase, found in Colwellia psychrerythraea (strain 34H / ATCC BAA-681) (Vibrio psychroerythus).